Consider the following 287-residue polypeptide: mRNA-capping enzyme regulatory subunit OPG124 (287 aa).

This sequence belongs to the orthopoxvirus mRNA-capping enzyme regulatory subunit family. As to quaternary structure, interacts with the catalytic subunit OPG113.

The protein resides in the virion. Its function is as follows. Regulatory subunit of the mRNA cap enzyme which stabilizes the catalytic subunit and enhances its methyltransferase activity through an allosteric mechanism. Heterodimeric mRNA capping enzyme catalyzes the linkage of a N7-methyl-guanosine moiety to the first transcribed nucleotide (cap 0 structure), whereas the methyltransferase OPG102 is responsible for a second methylation at the 2'-O position of the ribose (cap 1 structure). Also involved in early viral gene transcription termination and intermediate viral gene transcription initiation. Early gene transcription termination requires the termination factor VTF, the DNA-dependent ATPase NPH-I/OPG123 and the RAP94/OPG109 subunit of the viral RNA polymerase, as well as the presence of a specific termination motif. Binds, together with RAP94/OPG109, to the termination motif 5'-UUUUUNU-3' in the nascent early mRNA. In Bos taurus (Bovine), this protein is mRNA-capping enzyme regulatory subunit OPG124 (OPG124).